We begin with the raw amino-acid sequence, 310 residues long: Ribosomal RNA small subunit methyltransferase H (310 aa).

S-adenosyl-L-methionine is bound by residues A32–H34, D51, F78, D99, and Q106. Residues G290–K310 are disordered.

The protein belongs to the methyltransferase superfamily. RsmH family.

The protein localises to the cytoplasm. It carries out the reaction cytidine(1402) in 16S rRNA + S-adenosyl-L-methionine = N(4)-methylcytidine(1402) in 16S rRNA + S-adenosyl-L-homocysteine + H(+). In terms of biological role, specifically methylates the N4 position of cytidine in position 1402 (C1402) of 16S rRNA. This Exiguobacterium sp. (strain ATCC BAA-1283 / AT1b) protein is Ribosomal RNA small subunit methyltransferase H.